Reading from the N-terminus, the 311-residue chain is Methionyl-tRNA formyltransferase (311 aa).

112–115 provides a ligand contact to (6S)-5,6,7,8-tetrahydrofolate; that stretch reads SLLP.

It belongs to the Fmt family.

The catalysed reaction is L-methionyl-tRNA(fMet) + (6R)-10-formyltetrahydrofolate = N-formyl-L-methionyl-tRNA(fMet) + (6S)-5,6,7,8-tetrahydrofolate + H(+). Its function is as follows. Attaches a formyl group to the free amino group of methionyl-tRNA(fMet). The formyl group appears to play a dual role in the initiator identity of N-formylmethionyl-tRNA by promoting its recognition by IF2 and preventing the misappropriation of this tRNA by the elongation apparatus. This chain is Methionyl-tRNA formyltransferase, found in Rhizobium leguminosarum bv. trifolii (strain WSM2304).